Reading from the N-terminus, the 166-residue chain is Large ribosomal subunit protein uL10 (166 aa).

The protein belongs to the universal ribosomal protein uL10 family. Part of the ribosomal stalk of the 50S ribosomal subunit. The N-terminus interacts with L11 and the large rRNA to form the base of the stalk. The C-terminus forms an elongated spine to which L12 dimers bind in a sequential fashion forming a multimeric L10(L12)X complex.

Forms part of the ribosomal stalk, playing a central role in the interaction of the ribosome with GTP-bound translation factors. The polypeptide is Large ribosomal subunit protein uL10 (Alkaliphilus metalliredigens (strain QYMF)).